The primary structure comprises 240 residues: HTH-type transcriptional regulator Mce2R (240 aa).

An HTH gntR-type domain is found at 9–77 (RSVPEEVFEQ…QGDVTTVRDF (69 aa)). The segment at residues 37-56 (ERRLAELLGVSRPAVREALK) is a DNA-binding region (H-T-H motif).

Functionally, negatively regulates the expression of its operon as well as expression of end (endonuclease 4). The sequence is that of HTH-type transcriptional regulator Mce2R (mce2R) from Mycobacterium tuberculosis (strain CDC 1551 / Oshkosh).